The sequence spans 686 residues: WD repeat-containing protein 93 (686 aa).

Over residues 1 to 10 the composition is skewed to polar residues; sequence MSFPRGSQTQ. The interval 1–40 is disordered; sequence MSFPRGSQTQKIKHPIGTRKGPLEVPPPTEKDWPKDDEQD. The span at 29–40 shows a compositional bias: basic and acidic residues; it reads TEKDWPKDDEQD. The WD repeat unit spans residues 410–449; the sequence is PCAAPIAVSQLSCSSSYLVLACEDGVLTLWDLAKGFPLGV.

The polypeptide is WD repeat-containing protein 93 (WDR93) (Homo sapiens (Human)).